A 414-amino-acid chain; its full sequence is Glutamyl-tRNA reductase (414 aa).

Substrate-binding positions include 48 to 51 (TCNR), Ser104, 109 to 111 (EAQ), and Gln115. Cys49 acts as the Nucleophile in catalysis. 184 to 189 (GAGEMI) lines the NADP(+) pocket.

Belongs to the glutamyl-tRNA reductase family. As to quaternary structure, homodimer.

The catalysed reaction is (S)-4-amino-5-oxopentanoate + tRNA(Glu) + NADP(+) = L-glutamyl-tRNA(Glu) + NADPH + H(+). It participates in porphyrin-containing compound metabolism; protoporphyrin-IX biosynthesis; 5-aminolevulinate from L-glutamyl-tRNA(Glu): step 1/2. Catalyzes the NADPH-dependent reduction of glutamyl-tRNA(Glu) to glutamate 1-semialdehyde (GSA). This is Glutamyl-tRNA reductase from Methylobacillus flagellatus (strain ATCC 51484 / DSM 6875 / VKM B-1610 / KT).